We begin with the raw amino-acid sequence, 376 residues long: Chaperone protein DnaJ (376 aa).

Residues 4–70 (DYYQILGVSK…QKRAAYDRFG (67 aa)) form the J domain. The segment at 139 to 217 (GVEKNISFSS…CHGLGRYHKQ (79 aa)) adopts a CR-type zinc-finger fold. Zn(2+)-binding residues include Cys-152, Cys-155, Cys-169, Cys-172, Cys-191, Cys-194, Cys-205, and Cys-208. CXXCXGXG motif repeat units follow at residues 152–159 (CDTCHGSG), 169–176 (CDACGGVG), 191–198 (CHKCQGNG), and 205–212 (CKKCHGLG).

It belongs to the DnaJ family. As to quaternary structure, homodimer. It depends on Zn(2+) as a cofactor.

The protein resides in the cytoplasm. Its function is as follows. Participates actively in the response to hyperosmotic and heat shock by preventing the aggregation of stress-denatured proteins and by disaggregating proteins, also in an autonomous, DnaK-independent fashion. Unfolded proteins bind initially to DnaJ; upon interaction with the DnaJ-bound protein, DnaK hydrolyzes its bound ATP, resulting in the formation of a stable complex. GrpE releases ADP from DnaK; ATP binding to DnaK triggers the release of the substrate protein, thus completing the reaction cycle. Several rounds of ATP-dependent interactions between DnaJ, DnaK and GrpE are required for fully efficient folding. Also involved, together with DnaK and GrpE, in the DNA replication of plasmids through activation of initiation proteins. The chain is Chaperone protein DnaJ from Rickettsia bellii (strain OSU 85-389).